The sequence spans 396 residues: Protein RepA (396 aa).

Disordered stretches follow at residues 141-170 (SKELGKTGGRPRKKDSEEEPEKKPEEVTKK) and 356-396 (NQYK…LPTT). A compositionally biased stretch (basic and acidic residues) spans 154 to 168 (KDSEEEPEKKPEEVT).

This is Protein RepA (repA) from Bacillus subtilis.